We begin with the raw amino-acid sequence, 395 residues long: Cysteine synthase 2 (395 aa).

Residues 6–22 form a helical membrane-spanning segment; that stretch reads QDLASGIAMGAVFMYLL. Lys83 carries the post-translational modification N6-(pyridoxal phosphate)lysine. Residues 228–232 and Ser335 contribute to the pyridoxal 5'-phosphate site; that span reads GTGGT.

Belongs to the cysteine synthase/cystathionine beta-synthase family. It depends on pyridoxal 5'-phosphate as a cofactor.

It is found in the mitochondrion. Its subcellular location is the mitochondrion outer membrane. The enzyme catalyses O-acetyl-L-serine + hydrogen sulfide = L-cysteine + acetate. Functionally, putative cysteine synthase that catalyzes the conversion of O-acetyl-L-serine (OAS) into cysteine, the last step in the cysteine biosynthesis pathway. However, in contrast to cysteine synthase cys11, this CS-like protein seems not to function in cysteine biosynthesis, at least under normal growth conditions, although the transcript is produced. The sequence is that of Cysteine synthase 2 (cys12) from Schizosaccharomyces pombe (strain 972 / ATCC 24843) (Fission yeast).